Consider the following 318-residue polypeptide: MADILRQLLDCGKLSDETCHSILCGLGQHVDALHLSKTEEEVDGWTSEEDEELDQEYCRQVTESLGFDIDGKVCIPACGISPVFLGANKNPRSEVALYGRLGVHCFNIDKERKFQYMRIPKYNVQYPEAMSFHITVEVNDLADNSAHTLQNLVTRSFSRNGEDLRVSTGICRIKPKTPEREICLVDEEAIDKFYRGVMPNFVSKLGADDDKLRFYEVQEQDVCANDWLRLYTEFALFSYWRYNEDGFESCLPVEIKKIIVETCDTHREPRMKLKSSNAIFHINFNAKSCDYKSVSRRTTDGKPGHIVLEINTWKLSST.

The protein belongs to the UPF0725 (EMB2204) family.

The chain is UPF0725 protein At3g44770 from Arabidopsis thaliana (Mouse-ear cress).